Here is a 208-residue protein sequence, read N- to C-terminus: Ribosomal RNA small subunit methyltransferase G (208 aa).

S-adenosyl-L-methionine is bound by residues Gly-78, Phe-83, 101–103 (ERS), 129–130 (IE), and Arg-142.

The protein belongs to the methyltransferase superfamily. RNA methyltransferase RsmG family.

It localises to the cytoplasm. Functionally, specifically methylates the N7 position of a guanine in 16S rRNA. This Borreliella burgdorferi (strain ZS7) (Borrelia burgdorferi) protein is Ribosomal RNA small subunit methyltransferase G.